A 115-amino-acid polypeptide reads, in one-letter code: Dolichyl-diphosphooligosaccharide--protein glycosyltransferase subunit DAD1 (115 aa).

The Cytoplasmic portion of the chain corresponds to 1–31 (MARSTSKDAQALIQSLRSAYAATPSNLKIID). A helical membrane pass occupies residues 32–52 (LYVVFAVFTALIQVVYMAIVG). Residues 53–55 (SFP) are Lumenal-facing. Residues 56–76 (FNAFLSGLLSCIGTAVLAVCL) form a helical membrane-spanning segment. Over 77-94 (RIQVNKENKEFKDLAPER) the chain is Cytoplasmic. A helical transmembrane segment spans residues 95 to 115 (AFADFVLCNLVLHLVIMNFLG).

It belongs to the DAD/OST2 family. In terms of assembly, component of the oligosaccharyltransferase (OST) complex.

It is found in the endoplasmic reticulum membrane. It participates in protein modification; protein glycosylation. Its function is as follows. Subunit of the oligosaccharyl transferase (OST) complex that catalyzes the initial transfer of a defined glycan (Glc(3)Man(9)GlcNAc(2) in eukaryotes) from the lipid carrier dolichol-pyrophosphate to an asparagine residue within an Asn-X-Ser/Thr consensus motif in nascent polypeptide chains, the first step in protein N-glycosylation. N-glycosylation occurs cotranslationally and the complex associates with the Sec61 complex at the channel-forming translocon complex that mediates protein translocation across the endoplasmic reticulum (ER). All subunits are required for a maximal enzyme activity. The polypeptide is Dolichyl-diphosphooligosaccharide--protein glycosyltransferase subunit DAD1 (DAD1) (Betula pendula (European white birch)).